A 258-amino-acid polypeptide reads, in one-letter code: Glucanase inhibitor protein 1 (258 aa).

An N-terminal signal peptide occupies residues Met1 to Gly19. The 228-residue stretch at Ile27 to Lys254 folds into the Peptidase S1 domain. An intrachain disulfide couples Cys54 to Cys70. Asn87, Asn102, Asn107, Asn157, and Asn185 each carry an N-linked (GlcNAc...) asparagine glycan. 2 disulfides stabilise this stretch: Cys177–Cys189 and Cys199–Cys230.

Belongs to the peptidase S1 family. As to quaternary structure, forms an apoplastic complex with host endoglucanases in tomato leaves during P.infestans infection.

The protein resides in the secreted. Its function is as follows. Secreted effector that suppresses host plant glucan elicitor-mediated defense responses. Targets host endoglucanases and inhibits the endoglucanase-mediated release of elicitor-active glucan oligosaccharides from P.infestans cell walls. In Phytophthora infestans (Potato late blight agent), this protein is Glucanase inhibitor protein 1.